The following is a 312-amino-acid chain: Ribonuclease Z (312 aa).

His-62, His-64, Asp-66, His-67, His-144, Asp-215, and His-273 together coordinate Zn(2+). Catalysis depends on Asp-66, which acts as the Proton acceptor.

It belongs to the RNase Z family. In terms of assembly, homodimer. Zn(2+) serves as cofactor.

The catalysed reaction is Endonucleolytic cleavage of RNA, removing extra 3' nucleotides from tRNA precursor, generating 3' termini of tRNAs. A 3'-hydroxy group is left at the tRNA terminus and a 5'-phosphoryl group is left at the trailer molecule.. Functionally, zinc phosphodiesterase, which displays some tRNA 3'-processing endonuclease activity. Probably involved in tRNA maturation, by removing a 3'-trailer from precursor tRNA. The polypeptide is Ribonuclease Z (Prochlorococcus marinus (strain MIT 9515)).